A 191-amino-acid polypeptide reads, in one-letter code: ECF RNA polymerase sigma factor ShbA (191 aa).

Positions 27 to 98 (LLAHVHPLAL…HKVADLQRAA (72 aa)) are sigma-70 factor domain-2. A disordered region spans residues 100 to 122 (RHPGSTAVPSDEMPERPDDSLGP). A compositionally biased stretch (basic and acidic residues) spans 112–122 (MPERPDDSLGP). Positions 138–187 (LLANLPENQRELLVLRVAVGLTAEETGQMLGMSPGAVRVAQHRALSRLRA) are sigma-70 factor domain-4. Positions 160–179 (AEETGQMLGMSPGAVRVAQH) form a DNA-binding region, H-T-H motif.

This sequence belongs to the sigma-70 factor family. ECF subfamily.

Functionally, sigma factors are initiation factors that promote the attachment of RNA polymerase to specific initiation sites and are then released. Extracytoplasmic function (ECF) sigma factors are held in an inactive form by an anti-sigma factor until released. This alternative sigma factor governs the transcription of the principal sigma factor HrdB (SigA) throughout growth. Acts by binding to the promoter region. This Streptomyces griseus subsp. griseus (strain JCM 4626 / CBS 651.72 / NBRC 13350 / KCC S-0626 / ISP 5235) protein is ECF RNA polymerase sigma factor ShbA.